Reading from the N-terminus, the 227-residue chain is UPF0173 metal-dependent hydrolase STK_14180 (227 aa).

Belongs to the UPF0173 family.

The sequence is that of UPF0173 metal-dependent hydrolase STK_14180 from Sulfurisphaera tokodaii (strain DSM 16993 / JCM 10545 / NBRC 100140 / 7) (Sulfolobus tokodaii).